We begin with the raw amino-acid sequence, 99 residues long: Integration host factor subunit alpha (99 aa).

The tract at residues 49 to 70 is disordered; sequence FGNFDLRDKNQRPGRNPKTGED.

Belongs to the bacterial histone-like protein family. In terms of assembly, heterodimer of an alpha and a beta chain.

Functionally, this protein is one of the two subunits of integration host factor, a specific DNA-binding protein that functions in genetic recombination as well as in transcriptional and translational control. The sequence is that of Integration host factor subunit alpha from Cronobacter sakazakii (strain ATCC BAA-894) (Enterobacter sakazakii).